The sequence spans 122 residues: Biogenesis of lysosome-related organelles complex 1 subunit BLS1 (122 aa).

Serine 33 carries the post-translational modification Phosphoserine.

The protein belongs to the BLOC1S1 family. In terms of assembly, component of the biogenesis of lysosome-related organelles complex-1 (BLOC-1) composed of at least BLI1, BLS1, CNL1, KXD1, SNN1 and VAB2.

It localises to the endosome. Its function is as follows. Component of the biogenesis of lysosome-related organelles complex-1 (BLOC-1), a complex involved in endosomal cargo sorting. The polypeptide is Biogenesis of lysosome-related organelles complex 1 subunit BLS1 (BLS1) (Saccharomyces cerevisiae (strain YJM789) (Baker's yeast)).